Consider the following 370-residue polypeptide: 4-hydroxy-3-methylbut-2-en-1-yl diphosphate synthase (flavodoxin) (370 aa).

[4Fe-4S] cluster contacts are provided by Cys270, Cys273, Cys305, and Glu312.

This sequence belongs to the IspG family. Requires [4Fe-4S] cluster as cofactor.

The enzyme catalyses (2E)-4-hydroxy-3-methylbut-2-enyl diphosphate + oxidized [flavodoxin] + H2O + 2 H(+) = 2-C-methyl-D-erythritol 2,4-cyclic diphosphate + reduced [flavodoxin]. Its pathway is isoprenoid biosynthesis; isopentenyl diphosphate biosynthesis via DXP pathway; isopentenyl diphosphate from 1-deoxy-D-xylulose 5-phosphate: step 5/6. In terms of biological role, converts 2C-methyl-D-erythritol 2,4-cyclodiphosphate (ME-2,4cPP) into 1-hydroxy-2-methyl-2-(E)-butenyl 4-diphosphate. This is 4-hydroxy-3-methylbut-2-en-1-yl diphosphate synthase (flavodoxin) from Marinomonas sp. (strain MWYL1).